A 513-amino-acid polypeptide reads, in one-letter code: Glutamyl-tRNA(Gln) amidotransferase subunit B, mitochondrial (513 aa).

Belongs to the GatB/GatE family. GatB subfamily. In terms of assembly, subunit of the heterotrimeric GatFAB amidotransferase (AdT) complex, composed of A, B and F subunits.

The protein localises to the mitochondrion. It catalyses the reaction L-glutamyl-tRNA(Gln) + L-glutamine + ATP + H2O = L-glutaminyl-tRNA(Gln) + L-glutamate + ADP + phosphate + H(+). Its function is as follows. Allows the formation of correctly charged Gln-tRNA(Gln) through the transamidation of misacylated Glu-tRNA(Gln) in the mitochondria. The reaction takes place in the presence of glutamine and ATP through an activated gamma-phospho-Glu-tRNA(Gln). The polypeptide is Glutamyl-tRNA(Gln) amidotransferase subunit B, mitochondrial (Debaryomyces hansenii (strain ATCC 36239 / CBS 767 / BCRC 21394 / JCM 1990 / NBRC 0083 / IGC 2968) (Yeast)).